A 425-amino-acid chain; its full sequence is Enolase (425 aa).

Residue Gln-163 participates in (2R)-2-phosphoglycerate binding. Residue Glu-205 is the Proton donor of the active site. Mg(2+) is bound by residues Asp-242, Glu-286, and Asp-313. (2R)-2-phosphoglycerate contacts are provided by Lys-338, Arg-367, Ser-368, and Lys-389. Lys-338 functions as the Proton acceptor in the catalytic mechanism.

Belongs to the enolase family. Mg(2+) serves as cofactor.

The protein localises to the cytoplasm. The protein resides in the secreted. It localises to the cell surface. It catalyses the reaction (2R)-2-phosphoglycerate = phosphoenolpyruvate + H2O. It functions in the pathway carbohydrate degradation; glycolysis; pyruvate from D-glyceraldehyde 3-phosphate: step 4/5. Functionally, catalyzes the reversible conversion of 2-phosphoglycerate (2-PG) into phosphoenolpyruvate (PEP). It is essential for the degradation of carbohydrates via glycolysis. The chain is Enolase from Helicobacter hepaticus (strain ATCC 51449 / 3B1).